Reading from the N-terminus, the 341-residue chain is Protein quaking-A (341 aa).

The KH domain maps to 87-153; sequence FVPVKEYPDY…WEHLNEDLHV (67 aa). The SH3-binding motif lies at 276 to 279; it reads PPTP. The short motif at 324–330 is the Nuclear localization signal element; that stretch reads RVHPYQR.

This sequence belongs to the quaking family. As to quaternary structure, homodimer; does not require RNA to homodimerize.

The protein localises to the cytoplasm. It localises to the nucleus. Its function is as follows. RNA reader protein, which recognizes and binds specific RNAs, thereby regulating RNA metabolic processes, such as pre-mRNA splicing, circular RNA (circRNA) formation, mRNA export, mRNA stability and/or translation. Involved in various cellular processes, such as mRNA storage into stress granules, apoptosis, interferon response, glial cell fate and development. Binds to the 5'-NACUAAY-N(1,20)-UAAY-3' RNA core sequence. Acts as a mRNA modification reader that specifically recognizes and binds mRNA transcripts modified by internal N(7)-methylguanine (m7G). Promotes the formation of circular RNAs (circRNAs): acts by binding to sites flanking circRNA-forming exons. CircRNAs are produced by back-splicing circularization of pre-mRNAs. Required to protect and promote stability of mRNAs which promotes oligodendrocyte differentiation. Acts as an important regulator of muscle development: required during early skeletal myofibril formation by regulating the accumulation of the muscle-specific tropomyosin-3 (tpm3) transcripts. The chain is Protein quaking-A from Danio rerio (Zebrafish).